The following is a 23-amino-acid chain: Retinol-binding protein 3 (23 aa).

It localises to the secreted. The protein localises to the extracellular space. Its subcellular location is the extracellular matrix. The protein resides in the interphotoreceptor matrix. Its function is as follows. IRBP shuttles 11-cis and all trans retinoids between the retinol isomerase in the pigment epithelium and the visual pigments in the photoreceptor cells of the retina. This is Retinol-binding protein 3 (RBP3) from Oryctolagus cuniculus (Rabbit).